Here is a 296-residue protein sequence, read N- to C-terminus: Cell division protein DivIB (296 aa).

The Cytoplasmic portion of the chain corresponds to 1 to 25 (MMEDKIIHTPRFDEQRRMRRKKRQR). The chain crosses the membrane as a helical span at residues 26 to 46 (LQLFIFLSIVAIVSLILIYMF). Topologically, residues 47-296 (TSISYVKKIS…KELNQVKKNS (250 aa)) are extracellular. The POTRA domain maps to 50–118 (SYVKKISVND…NTVSINVEEY (69 aa)).

Belongs to the FtsQ/DivIB family. DivIB subfamily.

The protein resides in the cell membrane. Cell division protein that may be involved in stabilizing or promoting the assembly of the division complex. This chain is Cell division protein DivIB, found in Macrococcus caseolyticus (strain JCSC5402) (Macrococcoides caseolyticum).